A 94-amino-acid polypeptide reads, in one-letter code: Phosphoribosyl-ATP pyrophosphatase (94 aa).

Belongs to the PRA-PH family.

It is found in the cytoplasm. It carries out the reaction 1-(5-phospho-beta-D-ribosyl)-ATP + H2O = 1-(5-phospho-beta-D-ribosyl)-5'-AMP + diphosphate + H(+). Its pathway is amino-acid biosynthesis; L-histidine biosynthesis; L-histidine from 5-phospho-alpha-D-ribose 1-diphosphate: step 2/9. The polypeptide is Phosphoribosyl-ATP pyrophosphatase (Pyrobaculum neutrophilum (strain DSM 2338 / JCM 9278 / NBRC 100436 / V24Sta) (Thermoproteus neutrophilus)).